Consider the following 260-residue polypeptide: MSTNNSVLVLKVGGALLQCEMGMARLMDTAAAMIANGQQVLMVHGGGCLVDEQLAANGMETVKLEGLRVTPPEQMPIIAGALAGTSNKILQGAATKAGIVSVGMSLADGNTVSAKIKDERLGLVGEVSPKDATYLKFILSQGWMPICSSIAMMDDGQMLNVNADQAATVLAKLVGGKLVLLSDVSGVLDGKGQLIPSLTGQQIAELVKQGVIEKGMKVKVEAALEVAQWMGQAVQVASWRDASQLVALAKGEAVGTQIQP.

Substrate-binding positions include 46-47 (GG), arginine 68, and asparagine 160.

The protein belongs to the acetylglutamate kinase family. ArgB subfamily.

It is found in the cytoplasm. It carries out the reaction N-acetyl-L-glutamate + ATP = N-acetyl-L-glutamyl 5-phosphate + ADP. It participates in amino-acid biosynthesis; L-arginine biosynthesis; N(2)-acetyl-L-ornithine from L-glutamate: step 2/4. In terms of biological role, catalyzes the ATP-dependent phosphorylation of N-acetyl-L-glutamate. The chain is Acetylglutamate kinase from Shewanella sp. (strain MR-7).